A 446-amino-acid chain; its full sequence is Glucose-1-phosphate adenylyltransferase (446 aa).

Alpha-D-glucose 1-phosphate-binding positions include Tyr-119, Gly-184, 199–200 (EK), and Ser-217.

The protein belongs to the bacterial/plant glucose-1-phosphate adenylyltransferase family. As to quaternary structure, homotetramer.

The enzyme catalyses alpha-D-glucose 1-phosphate + ATP + H(+) = ADP-alpha-D-glucose + diphosphate. Its pathway is glycan biosynthesis; glycogen biosynthesis. Its function is as follows. Involved in the biosynthesis of ADP-glucose, a building block required for the elongation reactions to produce glycogen. Catalyzes the reaction between ATP and alpha-D-glucose 1-phosphate (G1P) to produce pyrophosphate and ADP-Glc. The protein is Glucose-1-phosphate adenylyltransferase of Rhodopirellula baltica (strain DSM 10527 / NCIMB 13988 / SH1).